Consider the following 307-residue polypeptide: Serine/threonine-protein phosphatase 4 catalytic subunit (307 aa).

Ala2 carries the post-translational modification N-acetylalanine. Positions 54, 56, 82, and 114 each coordinate Mn(2+). His115 serves as the catalytic Proton donor. Residues His164 and His238 each coordinate Mn(2+). Leu307 bears the Leucine methyl ester mark.

It belongs to the PPP phosphatase family. PP-4 (PP-X) subfamily. Serine/threonine-protein phosphatase 4 (PP4) occurs in different assemblies of the catalytic and one or more regulatory subunits. Component of the PP4 complexes PPP4C-PPP4R1, PPP4C-PPP4R2, PPP4C-PPP4R2-PPP4R3A, PPP4C-PPP4R2-PPP4R3B and PPP4C-PPP4R4. The PPP4C-PPP4R2 complex appears to be a tetramer composed of 2 molecules of PPP4C and 2 molecules of PPP4R2. Interacts with REL, NFKB1/p50 and RELA. Interacts with SMN1 and GEMIN4. Interacts with IRS4 (phosphorylated). Interacts with SMEK1/PPP4R3A; the interaction requires PP4R2. Interacts with HDAC3. The cofactor is Mn(2+). In terms of processing, methylation at the C-terminal Leu-307 is critical for interactions with regulatory subunits and functions in DNA repair.

Its subcellular location is the cytoplasm. The protein localises to the nucleus. It is found in the cytoskeleton. It localises to the microtubule organizing center. The protein resides in the centrosome. The catalysed reaction is O-phospho-L-seryl-[protein] + H2O = L-seryl-[protein] + phosphate. It carries out the reaction O-phospho-L-threonyl-[protein] + H2O = L-threonyl-[protein] + phosphate. Functionally, protein phosphatase that is involved in many processes such as microtubule organization at centrosomes, maturation of spliceosomal snRNPs, apoptosis, DNA repair, tumor necrosis factor (TNF)-alpha signaling, activation of c-Jun N-terminal kinase MAPK8, regulation of histone acetylation, DNA damage checkpoint signaling, NF-kappa-B activation and cell migration. The PPP4C-PPP4R1 PP4 complex may play a role in dephosphorylation and regulation of HDAC3. The PPP4C-PPP4R2-PPP4R3A PP4 complex specifically dephosphorylates H2AX phosphorylated on Ser-140 (gamma-H2AX) generated during DNA replication and required for DNA DSB repair. Dephosphorylates NDEL1 at CDK1 phosphorylation sites and negatively regulates CDK1 activity in interphase. In response to DNA damage, catalyzes RPA2 dephosphorylation, an essential step for DNA repair since it allows the efficient RPA2-mediated recruitment of RAD51 to chromatin. The protein is Serine/threonine-protein phosphatase 4 catalytic subunit (PPP4C) of Oryctolagus cuniculus (Rabbit).